The sequence spans 117 residues: Large ribosomal subunit protein bL20 (117 aa).

This sequence belongs to the bacterial ribosomal protein bL20 family.

Functionally, binds directly to 23S ribosomal RNA and is necessary for the in vitro assembly process of the 50S ribosomal subunit. It is not involved in the protein synthesizing functions of that subunit. The chain is Large ribosomal subunit protein bL20 from Streptococcus suis (strain 05ZYH33).